Reading from the N-terminus, the 495-residue chain is OTU domain-containing protein CG3251 (495 aa).

The region spanning 29–150 (LFRKHMLGDA…MGHFETVLTM (122 aa)) is the OTU domain. In terms of domain architecture, Tudor spans 302–364 (NFKVGAKCQV…HPLPPDEFKA (63 aa)). The span at 375 to 389 (LHNSQMGRQSVQGDQ) shows a compositional bias: polar residues. The interval 375 to 404 (LHNSQMGRQSVQGDQQGFVPDPMPGTAPSM) is disordered. Over residues 395-404 (DPMPGTAPSM) the composition is skewed to pro residues.

Its function is as follows. Putative OTU-type deubiquitinase. Catalytically inactive towards all diubiquitin molecules and long K48- and K63- linked ubiquitin chains in vitro. Potential modulator of apoptosis. In Drosophila melanogaster (Fruit fly), this protein is OTU domain-containing protein CG3251.